The sequence spans 278 residues: Phosphonates import ATP-binding protein PhnC 2 (278 aa).

The ABC transporter domain maps to 5-253; the sequence is IRVDSLNKTF…FLNELYGAEG (249 aa). 37–44 provides a ligand contact to ATP; it reads GASGSGKS.

This sequence belongs to the ABC transporter superfamily. Phosphonates importer (TC 3.A.1.9.1) family. As to quaternary structure, the complex is composed of two ATP-binding proteins (PhnC), two transmembrane proteins (PhnE) and a solute-binding protein (PhnD).

It is found in the cell inner membrane. The catalysed reaction is phosphonate(out) + ATP + H2O = phosphonate(in) + ADP + phosphate + H(+). Part of the ABC transporter complex PhnCDE involved in phosphonates import. Responsible for energy coupling to the transport system. The chain is Phosphonates import ATP-binding protein PhnC 2 from Pseudomonas aeruginosa (strain ATCC 15692 / DSM 22644 / CIP 104116 / JCM 14847 / LMG 12228 / 1C / PRS 101 / PAO1).